A 342-amino-acid chain; its full sequence is dTDP-3,4-didehydro-2,6-dideoxy-alpha-D-glucose 3-reductase (342 aa).

Cys19–Arg25 is an NADP(+) binding site. Substrate is bound at residue Arg26. NADP(+)-binding positions include Ser44 to Arg45, Tyr65, Leu81, and His86. Lys104 (proton donor) is an active-site residue. NADP(+) contacts are provided by Arg172 and Asp184. Residues Tyr243 and Ser263 each coordinate substrate.

The protein belongs to the Gfo/Idh/MocA family.

The enzyme catalyses dTDP-4-dehydro-2,6-dideoxy-alpha-D-glucose + NADP(+) = dTDP-3,4-didehydro-2,6-dideoxy-alpha-D-glucose + NADPH + H(+). It participates in antibiotic biosynthesis; granaticin biosynthesis. Involved in the biosynthesis of the 2,6-deoxysugar, dTDP-L-rhodinose, attached to the benzoisochromane quinone chromophore to produce the aglycone antibiotics granaticin and granaticin B. Catalyzes the reduction of the C-3 keto moiety of dTDP-3,4-diketo-2,6-dideoxy-alpha-D-glucose to yield dTDP-4-keto-2,6-dideoxy-alpha-D-glucose. NADPH is the better reductant, however NADH can also be used. This is dTDP-3,4-didehydro-2,6-dideoxy-alpha-D-glucose 3-reductase from Streptomyces violaceoruber.